The primary structure comprises 191 residues: Imidazoleglycerol-phosphate dehydratase (191 aa).

This sequence belongs to the imidazoleglycerol-phosphate dehydratase family.

Its subcellular location is the cytoplasm. It catalyses the reaction D-erythro-1-(imidazol-4-yl)glycerol 3-phosphate = 3-(imidazol-4-yl)-2-oxopropyl phosphate + H2O. It participates in amino-acid biosynthesis; L-histidine biosynthesis; L-histidine from 5-phospho-alpha-D-ribose 1-diphosphate: step 6/9. The sequence is that of Imidazoleglycerol-phosphate dehydratase from Thermodesulfovibrio yellowstonii (strain ATCC 51303 / DSM 11347 / YP87).